The following is a 149-amino-acid chain: Transcriptional repressor NrdR (149 aa).

A zinc finger lies at 3-34 (CPFCSATDTKVIDSRLVAEGHQVRRRRECTEC). In terms of domain architecture, ATP-cone spans 49 to 139 (PRVIKRDGSR…VYRAFEDVSE (91 aa)).

This sequence belongs to the NrdR family. Zn(2+) is required as a cofactor.

Negatively regulates transcription of bacterial ribonucleotide reductase nrd genes and operons by binding to NrdR-boxes. This chain is Transcriptional repressor NrdR, found in Shewanella baltica (strain OS223).